A 319-amino-acid polypeptide reads, in one-letter code: Ribose-phosphate pyrophosphokinase (319 aa).

Residues 40–42 (DGE) and 99–100 (RQ) each bind ATP. Mg(2+)-binding residues include H134 and D174. K198 is a catalytic residue. D-ribose 5-phosphate-binding positions include R200, D224, and 228–232 (DTAGT).

It belongs to the ribose-phosphate pyrophosphokinase family. Class I subfamily. As to quaternary structure, homohexamer. Mg(2+) serves as cofactor.

Its subcellular location is the cytoplasm. It catalyses the reaction D-ribose 5-phosphate + ATP = 5-phospho-alpha-D-ribose 1-diphosphate + AMP + H(+). It participates in metabolic intermediate biosynthesis; 5-phospho-alpha-D-ribose 1-diphosphate biosynthesis; 5-phospho-alpha-D-ribose 1-diphosphate from D-ribose 5-phosphate (route I): step 1/1. Functionally, involved in the biosynthesis of the central metabolite phospho-alpha-D-ribosyl-1-pyrophosphate (PRPP) via the transfer of pyrophosphoryl group from ATP to 1-hydroxyl of ribose-5-phosphate (Rib-5-P). This is Ribose-phosphate pyrophosphokinase from Xanthomonas campestris pv. campestris (strain ATCC 33913 / DSM 3586 / NCPPB 528 / LMG 568 / P 25).